The chain runs to 331 residues: Osmotic avoidance abnormal protein 8 (331 aa).

Residues 1 to 21 form the signal peptide; that stretch reads MPAKMLKWLLIHIFLIHSIFC.

In terms of tissue distribution, expressed in the hypodermal syncitium but not in hypodermal seam cells.

It localises to the secreted. Its function is as follows. Negative regulator of the osmotic stress response. Acts via the transmembrane protein ptr-23. This is Osmotic avoidance abnormal protein 8 (osm-8) from Caenorhabditis elegans.